The chain runs to 564 residues: Proline--tRNA ligase (564 aa).

Belongs to the class-II aminoacyl-tRNA synthetase family. ProS type 1 subfamily. As to quaternary structure, homodimer.

Its subcellular location is the cytoplasm. It carries out the reaction tRNA(Pro) + L-proline + ATP = L-prolyl-tRNA(Pro) + AMP + diphosphate. Functionally, catalyzes the attachment of proline to tRNA(Pro) in a two-step reaction: proline is first activated by ATP to form Pro-AMP and then transferred to the acceptor end of tRNA(Pro). As ProRS can inadvertently accommodate and process non-cognate amino acids such as alanine and cysteine, to avoid such errors it has two additional distinct editing activities against alanine. One activity is designated as 'pretransfer' editing and involves the tRNA(Pro)-independent hydrolysis of activated Ala-AMP. The other activity is designated 'posttransfer' editing and involves deacylation of mischarged Ala-tRNA(Pro). The misacylated Cys-tRNA(Pro) is not edited by ProRS. The protein is Proline--tRNA ligase of Xylella fastidiosa (strain M12).